The sequence spans 332 residues: L-lactate dehydrogenase C chain (332 aa).

The residue at position 2 (Ser2) is a Blocked amino end (Ser). Residues Gly29–Lys57 and Arg99 each bind NAD(+). Residues Arg106, Asn138, and Arg169 each coordinate substrate. Asn138 lines the NAD(+) pocket. His193 serves as the catalytic Proton acceptor. Thr248 is a substrate binding site.

It belongs to the LDH/MDH superfamily. LDH family. As to quaternary structure, homotetramer. Interacts with RABL2/RABL2A; binds preferentially to GTP-bound RABL2.

Its subcellular location is the cytoplasm. The catalysed reaction is (S)-lactate + NAD(+) = pyruvate + NADH + H(+). It participates in fermentation; pyruvate fermentation to lactate; (S)-lactate from pyruvate: step 1/1. In terms of biological role, possible role in sperm motility. The protein is L-lactate dehydrogenase C chain (Ldhc) of Rattus norvegicus (Rat).